The primary structure comprises 633 residues: E3 ubiquitin-protein ligase ZSWIM2 (633 aa).

The segment at 54–87 (FRVFLGNPHVCNCSTFPKGGELCKHICWVLLKKF) adopts an SWIM-type zinc-finger fold. Residues 147 to 198 (CSICQELLLEKKLPVTFCRFGCGNSIHIKCMKILANYQSTSNTSMLKCPLCR) form an RING-type 1 zinc finger. A ZZ-type zinc finger spans residues 229–280 (HLGIPCNNCKQFPIEGKCYKCTECIEYHLCQECFDSCCHLSHTFTFREKRNQ). 8 residues coordinate Zn(2+): C234, C237, C249, C252, C258, C261, H267, and H270. An RING-type 2 zinc finger spans residues 344–388 (CLLCLKAFHLGQHTRLLPCTHKFHRKCIDNWLFHKCNSCPIDGQV).

As to quaternary structure, dimer. Interacts with UBE2D1. In terms of processing, polyubiquitinated. Polyubiquitination is followed by degradation via the proteasome. In terms of tissue distribution, expression is testis-specific.

It carries out the reaction S-ubiquitinyl-[E2 ubiquitin-conjugating enzyme]-L-cysteine + [acceptor protein]-L-lysine = [E2 ubiquitin-conjugating enzyme]-L-cysteine + N(6)-ubiquitinyl-[acceptor protein]-L-lysine.. Functionally, E3 ubiquitin-protein ligase involved in the regulation of Fas-, DR3- and DR4-mediated apoptosis. Functions in conjunction with the UBE2D1, UBE2D3 and UBE2E1 E2 ubiquitin-conjugating enzymes. This is E3 ubiquitin-protein ligase ZSWIM2 from Homo sapiens (Human).